The chain runs to 175 residues: Glucagon family neuropeptides (175 aa).

An N-terminal signal peptide occupies residues 1–23 (MSGNVYKTLLTLLVYGLIMHCNV). The propeptide occupies 24-80 (YCSPDRWTPVPGAKLEEEVYDEDGNTLQDFALRAGAPGGGGPRPRWGRCTALYYPPG). An important for receptor binding region spans residues 149–157 (VKKYLAAVL). Leucine 157 is modified (leucine amide). Lysine 168 is subject to Lysine amide. Residues 172–175 (VAYL) constitute a propeptide that is removed on maturation.

This sequence belongs to the glucagon family.

It is found in the secreted. Primary role of GRF is to release GH from the pituitary. Its function is as follows. PACAP is a neuropeptide involved in diverse array of physiological processes through activating the PACAP subfamily of class B1 G protein-coupled receptors: VIP receptor 1 (VIPR1), VIP receptor 2 (VIPR2), and PACAP type I receptor (ADCYAP1R1). Exerts neuroprotective and general cytoprotective effects due to anti-apoptotic, anti-inflammatory, and antioxidant actions. Promotes neuron projection development through the RAPGEF2/Rap1/B-Raf/ERK pathway. In chromaffin cells, induces long-lasting increase of intracellular calcium concentrations and neuroendocrine secretion. Involved in the control of glucose homeostasis, induces insulin secretion by pancreatic beta cells. PACAP exists in two bioactive forms from proteolysis of the same precursor protein, PACAP27 and PACAP38, which differ by eleven amino acid residues in the C-terminus. This Gallus gallus (Chicken) protein is Glucagon family neuropeptides (ADCYAP1).